The following is a 310-amino-acid chain: Cytochrome f (310 aa).

An N-terminal signal peptide occupies residues 1–23 (MRRLIPILLGSLVLSLSILVAPA). Heme contacts are provided by Y28, C48, C51, and H52. The helical transmembrane segment at 277–297 (IYGLLAFFVAVSLAQILLVLK) threads the bilayer.

This sequence belongs to the cytochrome f family. In terms of assembly, the 4 large subunits of the cytochrome b6-f complex are cytochrome b6, subunit IV (17 kDa polypeptide, PetD), cytochrome f and the Rieske protein, while the 4 small subunits are PetG, PetL, PetM and PetN. The complex functions as a dimer. Heme serves as cofactor.

It is found in the cellular thylakoid membrane. Functionally, component of the cytochrome b6-f complex, which mediates electron transfer between photosystem II (PSII) and photosystem I (PSI), cyclic electron flow around PSI, and state transitions. In Prochlorococcus marinus (strain MIT 9303), this protein is Cytochrome f.